The primary structure comprises 1335 residues: Mediator of RNA polymerase II transcription subunit 15a (1335 aa).

8 disordered regions span residues 1 to 27, 109 to 172, 190 to 225, 241 to 389, 401 to 448, 496 to 525, 567 to 591, and 683 to 815; these read MDNN…TQLP, GTSI…NNNT, QDSS…QQQP, FQSG…QHQQ, IQQQ…TQSN, LYSS…QQLG, SQRT…ANGG, and HRPR…QSNV. Polar residues-rich tracts occupy residues 110-158, 190-207, and 241-257; these read TSID…TALP, QDSS…SGPQ, and FQSG…PSHI. Residues 258 to 270 show a composition bias toward low complexity; it reads QQQQQNVLQPNQL. Residues 271 to 299 show a composition bias toward polar residues; the sequence is HSSQQPGVPTSATQPSTVNSAPLQGLHTN. The span at 300 to 314 shows a compositional bias: low complexity; sequence QQSSPQLSSQQTTQS. Residues 315–328 are compositionally biased toward polar residues; it reads MLRQHQSSMLRQHP. Low complexity predominate over residues 329–362; the sequence is QSQQASGIHQQQSSLPQQSISPLQQQPTQLMRQQ. Residues 363-374 show a composition bias toward polar residues; the sequence is AANSSGIQQKQM. Low complexity predominate over residues 401–436; the sequence is IQQQQSQQQPLQQPQQQQKQQPPAQQQLMSQQNSLQ. Residues 437–448 are compositionally biased toward polar residues; that stretch reads ATHQNPLGTQSN. Over residues 498–525 the composition is skewed to low complexity; that stretch reads SSQGQQSQNQPSQQQMMPQLQSHHQQLG. Residues 567–588 show a composition bias toward polar residues; that stretch reads SQRTLPEMPSSSLDSTAQTESA. The segment covering 688-712 has biased composition (low complexity); it reads PVQQGQLPQSQMQPMQQPQSQTVQD. 3 stretches are compositionally biased toward polar residues: residues 716-728, 735-749, and 756-815; these read DNQT…SMSM, AQQS…NVLS, and APQQ…QSNV. A coiled-coil region spans residues 834-882; sequence QDQQMQLKQQFQQRQMQQQQLQARQQQQQQQLQARQQAAQLQQMNDMND. Disordered stretches follow at residues 947–986 and 1146–1165; these read KMGT…SSSL and FAGS…GKKA. Residues 957–973 show a composition bias toward low complexity; sequence SPFVVPSPSSTPLAPSP. The span at 1148-1160 shows a compositional bias: polar residues; the sequence is GSETSDLESTATS.

It belongs to the plant Mediator complex subunit 15 family. In terms of assembly, component of the Mediator complex.

The protein localises to the nucleus. Functionally, component of the Mediator complex, a coactivator involved in the regulated transcription of nearly all RNA polymerase II-dependent genes. Mediator functions as a bridge to convey information from gene-specific regulatory proteins to the basal RNA polymerase II transcription machinery. The Mediator complex, having a compact conformation in its free form, is recruited to promoters by direct interactions with regulatory proteins and serves for the assembly of a functional preinitiation complex with RNA polymerase II and the general transcription factors. The chain is Mediator of RNA polymerase II transcription subunit 15a (MED15A) from Arabidopsis thaliana (Mouse-ear cress).